We begin with the raw amino-acid sequence, 186 residues long: Nicotinamide-nucleotide adenylyltransferase (186 aa).

The protein belongs to the archaeal NMN adenylyltransferase family.

It is found in the cytoplasm. It catalyses the reaction beta-nicotinamide D-ribonucleotide + ATP + H(+) = diphosphate + NAD(+). It functions in the pathway cofactor biosynthesis; NAD(+) biosynthesis; NAD(+) from nicotinamide D-ribonucleotide: step 1/1. The sequence is that of Nicotinamide-nucleotide adenylyltransferase from Pyrococcus horikoshii (strain ATCC 700860 / DSM 12428 / JCM 9974 / NBRC 100139 / OT-3).